The primary structure comprises 1471 residues: Myosin-51 (1471 aa).

Residues 7-61 (SVGSECWVSNNNGHWDAARLIEIKDNGGGKVVATVAKSSGVLETVNYQQLQNRNI) enclose the Myosin N-terminal SH3-like domain. One can recognise a Myosin motor domain in the interval 65 to 749 (ESPSDLTNLP…VIGNFEEAHR (685 aa)). Position 159-166 (159-166 (GESGAGKT)) interacts with ATP. Residues 628 to 650 (LSQLMTTVSSTNVHYIRCIKPNE) are actin-binding. 6 consecutive IQ domains span residues 753–773 (SKST…KEYQ), 776–796 (VKFI…QRFE), 801–821 (ERAA…KRYL), 824–844 (IKCA…SRYI), 849–869 (ESSA…KTFR), and 872–892 (KKSV…RYLR). A coiled-coil region spans residues 909–952 (KNLQASITEVSKQLKSNSKKVTVLRNKLNILNNSLSKWKCLIKK). One can recognise a Dilute domain in the interval 1171–1417 (EKPLQAVLYW…SKAVEALSCK (247 aa)).

The protein belongs to the TRAFAC class myosin-kinesin ATPase superfamily. Myosin family.

It is found in the cytoplasm. Involved in cytokinesis. The polypeptide is Myosin-51 (myo51) (Schizosaccharomyces pombe (strain 972 / ATCC 24843) (Fission yeast)).